We begin with the raw amino-acid sequence, 360 residues long: Peptide chain release factor 1 (360 aa).

Residue Q235 is modified to N5-methylglutamine. Residues 284-312 (AKRQQAEASTRRNLLGSGDRSDRNRTYNF) are disordered.

This sequence belongs to the prokaryotic/mitochondrial release factor family. In terms of processing, methylated by PrmC. Methylation increases the termination efficiency of RF1.

It localises to the cytoplasm. Peptide chain release factor 1 directs the termination of translation in response to the peptide chain termination codons UAG and UAA. This chain is Peptide chain release factor 1, found in Escherichia coli O81 (strain ED1a).